The sequence spans 107 residues: Large ribosomal subunit protein uL24 (107 aa).

Belongs to the universal ribosomal protein uL24 family. As to quaternary structure, part of the 50S ribosomal subunit.

Its function is as follows. One of two assembly initiator proteins, it binds directly to the 5'-end of the 23S rRNA, where it nucleates assembly of the 50S subunit. In terms of biological role, one of the proteins that surrounds the polypeptide exit tunnel on the outside of the subunit. The chain is Large ribosomal subunit protein uL24 from Mesomycoplasma hyopneumoniae (strain 7448) (Mycoplasma hyopneumoniae).